Reading from the N-terminus, the 135-residue chain is C-type lectin APL (135 aa).

Disulfide bonds link Cys3/Cys14, Cys31/Cys131, Cys38/Cys133, and Cys106/Cys123. Positions 10–132 constitute a C-type lectin domain; the sequence is MNGLCYKIFD…CESKNAFLCQ (123 aa). The Ca(2+) site is built by Gln96, Asp98, Glu104, Asn119, and Asp120. The short motif at 96 to 98 is the Galactose-binding element; that stretch reads QPD.

Belongs to the true venom lectin family. Homodimer; disulfide-linked. In terms of tissue distribution, expressed by the venom gland.

Its subcellular location is the secreted. Beta-galactoside lectin that agglutinates rabbit and human erythrocytes in a calcium-dependent fashion (MHC is 0.21 ug/ml on rabbit erythrocytes). Galactose (15 mM), lactose (20 mM), rhamnose (20 mM) and EGTA strongly inhibit this activity. The chain is C-type lectin APL from Agkistrodon piscivorus piscivorus (Eastern cottonmouth).